The sequence spans 407 residues: Na(+)-translocating NADH-quinone reductase subunit F (407 aa).

Residues 3–23 (IILGVVMFTLIVLVLSGLILA) form a helical membrane-spanning segment. The region spanning 32–126 (GDVVIEINNE…NMKIELPEEI (95 aa)) is the 2Fe-2S ferredoxin-type domain. The [2Fe-2S] cluster site is built by Cys-69, Cys-75, Cys-78, and Cys-110. Residues 129 to 269 (VKKWECEVIS…SGPFGEFFAK (141 aa)) enclose the FAD-binding FR-type domain.

It belongs to the NqrF family. Composed of six subunits; NqrA, NqrB, NqrC, NqrD, NqrE and NqrF. [2Fe-2S] cluster serves as cofactor. It depends on FAD as a cofactor.

The protein resides in the cell inner membrane. The enzyme catalyses a ubiquinone + n Na(+)(in) + NADH + H(+) = a ubiquinol + n Na(+)(out) + NAD(+). Its function is as follows. NQR complex catalyzes the reduction of ubiquinone-1 to ubiquinol by two successive reactions, coupled with the transport of Na(+) ions from the cytoplasm to the periplasm. The first step is catalyzed by NqrF, which accepts electrons from NADH and reduces ubiquinone-1 to ubisemiquinone by a one-electron transfer pathway. The chain is Na(+)-translocating NADH-quinone reductase subunit F from Klebsiella pneumoniae subsp. pneumoniae (strain ATCC 700721 / MGH 78578).